Reading from the N-terminus, the 1481-residue chain is DNA excision repair protein ERCC-6 (1481 aa).

Residues 1-506 (MFHEEVPNST…GFLFKKLFKY (506 aa)) form an N-terminal domain; essential for its chromatin remodeling activity region. The residue at position 158 (S158) is a Phosphoserine; by CDK2. An N6-methylated lysine; by EHMT2 modification is found at K170. K256 participates in a covalent cross-link: Glycyl lysine isopeptide (Lys-Gly) (interchain with G-Cter in SUMO2). K298 is subject to N6-methylated lysine; by EHMT2. The interval 309-452 (AIETKADQRS…RKVARRQDDG (144 aa)) is disordered. Over residues 327 to 337 (RLKKHSRKLQR) the composition is skewed to basic residues. The segment covering 353–363 (KPLEPEVRPEA) has biased composition (basic and acidic residues). Acidic residues-rich tracts occupy residues 378-390 (DGEEEEEQEEEEG) and 420-435 (EIDDDFFPSSEEEDEA). A phosphoserine mark is found at S428 and S429. K444 is modified (N6-methylated lysine; by EHMT2). Phosphoserine occurs at positions 482 and 485. The Helicase ATP-binding domain maps to 515-691 (WELHCQQAGG…WSLFDFIFPG (177 aa)). An ATP-binding site is contributed by 528 to 535 (DEMGLGKT). The DEAH box motif lies at 642 to 645 (DEGH). The Helicase C-terminal domain maps to 839–998 (VVESLLKIWH…RRFFKSNDLY (160 aa)). 3 disordered regions span residues 1040–1096 (LGTD…NRAS), 1114–1238 (SVMS…DRSS), and 1307–1372 (GHRG…GAPS). K1047 is modified (N6-methylated lysine; by EHMT2). Positions 1138–1147 (ASTSEKQGSS) are enriched in polar residues. Residues 1192–1201 (QPKQKAKNSK) show a composition bias toward basic residues. The span at 1202-1212 (HCRDAKFEGTR) shows a compositional bias: basic and acidic residues. Positions 1330–1345 (LPVQHPSSLTEKTQNN) are enriched in polar residues. Basic and acidic residues predominate over residues 1346–1364 (MKKEGKAHTPEHFSGKEDG). The short motif at 1373 to 1385 (SSSLLARMRARNH) is the CSA-interacting motif (CIM) element. Residues 1387–1416 (ILPERLESDSEHLAEAAAVPPCGTEHDDLL) form a ubiquitin-binding domain (UBD) region. Positions 1417 to 1481 (VDMRNFIAFQ…GIWKLKPEYC (65 aa)) are winged-helix domain (WHD). The tract at residues 1434-1481 (STQEILQEFESKLSVAQSCVFRELLRNLCNFHRTPGGEGIWKLKPEYC) is essential for its interaction with RNA polymerase II, transcription-coupled nucleotide excision repair activity, association with chromatin after UV irradiation and for mediating the UV-induced translocation of ERRC8 to the nuclear matrix.

Belongs to the SNF2/RAD54 helicase family. Homodimer. Binds DNA. Interacts with ERCC8. Interacts with RNA polymerase II; interaction is enhanced by UV irradiation. Component of the B-WICH complex, at least composed of SMARCA5/SNF2H, BAZ1B/WSTF, SF3B1, DEK, MYO1C, ERCC6, MYBBP1A and DDX21. Interacts with KIAA1530/UVSSA. Interacts with ELOA and CUL5; the interaction is induced by DNA damaging agents or by inhibitors of RNA polymerase II elongation. Interacts (via WHD region) with RIF1. Interacts with SMARCC2/BAF170, SMARCB1/BAF47 and the neuron-specific chromatin remodeling complex (nBAF complex). Interacts with ERCC5/XPG (via C-terminus); the interaction stimulates ERCC6/CSB binding to DNA repair bubble and ERCC6/CSB ATPase activity. May form a complex composed of RNA polymerase II, ERCC6/CSB and ERCC5/XPG which associates with the DNA repair bubble during transcription-coupled nucleotide excision repair. Interacts with CAND1, CSTF1, DDX3X, DDX5, DDX17, DDX23, DHX36, HDAC1, HNRNPU, MTA2, PRPF3, PSMD3, RBBP4, SFPQ, SMARCA1, SMARCA2, TOP1, USP7 and XRCC5. In terms of processing, phosphorylated in a cell cycle-dependent manner at Ser-158 by cyclin A-CDK2 in response to DNA damage. Phosphorylation at this site promotes the intramolecular interaction of the N-terminal domain with the helicase ATP-binding domain, thereby probably releasing the inhibitory effect of the N-terminal domain on its ATPase activity. Phosphorylation is essential for its chromatin remodeling activity. Ubiquitinated at the C-terminus. Ubiquitination by the CSA complex leads to ERCC6 proteasomal degradation in a UV-dependent manner. Stabilized following interaction with KIAA1530/UVSSA, which promotes recruitment of deubiquitinating enzyme USP7, leading to deubiquitination of ERCC6 thereby preventing UV-induced degradation of ERCC6 by the proteasome.

It localises to the nucleus. The protein localises to the chromosome. It carries out the reaction ATP + H2O = ADP + phosphate + H(+). Functionally, essential factor involved in transcription-coupled nucleotide excision repair (TC-NER), a process during which RNA polymerase II-blocking lesions are rapidly removed from the transcribed strand of active genes. Plays a central role in the initiation of the TC-NER process: specifically recognizes and binds RNA polymerase II stalled at a lesion, and mediates recruitment of ERCC8/CSA, initiating DNA damage excision by TFIIH recruitment. Upon DNA-binding, it locally modifies DNA conformation by wrapping the DNA around itself, thereby modifying the interface between stalled RNA polymerase II and DNA. Acts as a chromatin remodeler at DSBs; DNA-dependent ATPase-dependent activity is essential for this function. Plays an important role in regulating the choice of the DNA double-strand breaks (DSBs) repair pathway and G2/M checkpoint activation; DNA-dependent ATPase activity is essential for this function. Regulates the DNA repair pathway choice by inhibiting non-homologous end joining (NHEJ), thereby promoting the homologous recombination (HR)-mediated repair of DSBs during the S/G2 phases of the cell cycle. Mediates the activation of the ATM- and CHEK2-dependent DNA damage responses thus preventing premature entry of cells into mitosis following the induction of DNA DSBs. Remodels chromatin by evicting histones from chromatin flanking DSBs, limiting RIF1 accumulation at DSBs thereby promoting BRCA1-mediated HR. Required for stable recruitment of ELOA and CUL5 to DNA damage sites. Also involved in UV-induced translocation of ERCC8 to the nuclear matrix. Essential for neuronal differentiation and neuritogenesis; regulates transcription and chromatin remodeling activities required during neurogenesis. The polypeptide is DNA excision repair protein ERCC-6 (Ercc6) (Mus musculus (Mouse)).